The primary structure comprises 661 residues: UvrABC system protein B (661 aa).

The 387-residue stretch at 28-414 folds into the Helicase ATP-binding domain; it reads DGVNEGKRHQ…HTDEMVEQII (387 aa). 41–48 is a binding site for ATP; that stretch reads GATGTGKT. The short motif at 94-117 is the Beta-hairpin element; sequence YYDYYQPEAYVPSTDTFIEKDASI. The 167-residue stretch at 432–598 folds into the Helicase C-terminal domain; sequence QIDDLLSEIQ…TINKKIHDVI (167 aa). The interval 603 to 624 is disordered; the sequence is ESDETNQQQQTELPKKMTKKER. Residues 625–660 form the UVR domain; the sequence is QKTIENIEKEMKKAAKDLDFEKATELRDMLFELKAE.

This sequence belongs to the UvrB family. As to quaternary structure, forms a heterotetramer with UvrA during the search for lesions. Interacts with UvrC in an incision complex.

The protein resides in the cytoplasm. The UvrABC repair system catalyzes the recognition and processing of DNA lesions. A damage recognition complex composed of 2 UvrA and 2 UvrB subunits scans DNA for abnormalities. Upon binding of the UvrA(2)B(2) complex to a putative damaged site, the DNA wraps around one UvrB monomer. DNA wrap is dependent on ATP binding by UvrB and probably causes local melting of the DNA helix, facilitating insertion of UvrB beta-hairpin between the DNA strands. Then UvrB probes one DNA strand for the presence of a lesion. If a lesion is found the UvrA subunits dissociate and the UvrB-DNA preincision complex is formed. This complex is subsequently bound by UvrC and the second UvrB is released. If no lesion is found, the DNA wraps around the other UvrB subunit that will check the other stand for damage. The polypeptide is UvrABC system protein B (Staphylococcus epidermidis (strain ATCC 35984 / DSM 28319 / BCRC 17069 / CCUG 31568 / BM 3577 / RP62A)).